The following is a 313-amino-acid chain: Ester hydrolase C11orf54 homolog (313 aa).

Residues His-264, His-266, and His-276 each coordinate Zn(2+).

In terms of assembly, monomer. The cofactor is Zn(2+).

It is found in the nucleus. The protein resides in the cytoplasm. Exhibits ester hydrolase activity on the substrate p-nitrophenyl acetate, in vitro. May regulate DNA damage and repair by regulating HIF1A degradation via chaperone-mediated autophagy (CMA). The sequence is that of Ester hydrolase C11orf54 homolog from Xenopus tropicalis (Western clawed frog).